Here is a 132-residue protein sequence, read N- to C-terminus: NADH-quinone oxidoreductase subunit A 2 (132 aa).

3 consecutive transmembrane segments (helical) span residues Ala9 to Leu29, Leu66 to Val86, and Trp93 to Leu113.

Belongs to the complex I subunit 3 family. As to quaternary structure, NDH-1 is composed of 13 different subunits. Subunits NuoA, H, J, K, L, M, N constitute the membrane sector of the complex.

It localises to the cell inner membrane. It catalyses the reaction a quinone + NADH + 5 H(+)(in) = a quinol + NAD(+) + 4 H(+)(out). NDH-1 shuttles electrons from NADH, via FMN and iron-sulfur (Fe-S) centers, to quinones in the respiratory chain. The immediate electron acceptor for the enzyme in this species is believed to be ubiquinone. Couples the redox reaction to proton translocation (for every two electrons transferred, four hydrogen ions are translocated across the cytoplasmic membrane), and thus conserves the redox energy in a proton gradient. In Pseudomonas paraeruginosa (strain DSM 24068 / PA7) (Pseudomonas aeruginosa (strain PA7)), this protein is NADH-quinone oxidoreductase subunit A 2.